The chain runs to 404 residues: MKLPIYLDYAATTPVDPRVAEKMMQCMTMDGIFGNPASRSHRYGWQAEEAVDIARNQVAELINADPREIVFTSGATESDNLAIKGVAHFYHKKGKHIITSKTEHKAVLDTCRQLEREGFEVTYLAPESNGLIPLETIEAAMREDTILVSIMHVNNEIGVIHDISAIGELCRSKKIIFHVDAAQSAGKLPIDVQSMKVDLISISAHKMYGPKGIGALYVRRKPRIRLEATMHGGGHERGMRSGTLATHQIVGMGEAAAIAKADMTTDNARIRTLRDRLWNGVKGIEETYINGDFEQSYCGSLNVSFNFVEGESLMMALKDLAVSSGSACTSASLEPSYVLRALGLNDEMAHSSIRFSIGRFTTEEEIDHAIETINKSIGDLREMSPLWEMFQDGVDLDKVQWAHH.

Residues A75–T76, N155, Q183, and S203–H205 each bind pyridoxal 5'-phosphate. K206 is modified (N6-(pyridoxal phosphate)lysine). Pyridoxal 5'-phosphate is bound at residue T243. C328 acts as the Cysteine persulfide intermediate in catalysis. C328 contacts [2Fe-2S] cluster.

This sequence belongs to the class-V pyridoxal-phosphate-dependent aminotransferase family. NifS/IscS subfamily. Homodimer. Forms a heterotetramer with IscU, interacts with other sulfur acceptors. Requires pyridoxal 5'-phosphate as cofactor.

It is found in the cytoplasm. The catalysed reaction is (sulfur carrier)-H + L-cysteine = (sulfur carrier)-SH + L-alanine. The protein operates within cofactor biosynthesis; iron-sulfur cluster biosynthesis. Its function is as follows. Master enzyme that delivers sulfur to a number of partners involved in Fe-S cluster assembly, tRNA modification or cofactor biosynthesis. Catalyzes the removal of elemental sulfur atoms from cysteine to produce alanine. Functions as a sulfur delivery protein for Fe-S cluster synthesis onto IscU, an Fe-S scaffold assembly protein, as well as other S acceptor proteins. This is Cysteine desulfurase IscS from Shewanella sediminis (strain HAW-EB3).